Reading from the N-terminus, the 141-residue chain is ATP synthase epsilon chain (141 aa).

This sequence belongs to the ATPase epsilon chain family. F-type ATPases have 2 components, CF(1) - the catalytic core - and CF(0) - the membrane proton channel. CF(1) has five subunits: alpha(3), beta(3), gamma(1), delta(1), epsilon(1). CF(0) has three main subunits: a, b and c.

Its subcellular location is the cell inner membrane. In terms of biological role, produces ATP from ADP in the presence of a proton gradient across the membrane. In Thioalkalivibrio sulfidiphilus (strain HL-EbGR7), this protein is ATP synthase epsilon chain.